The following is a 511-amino-acid chain: Maturase K (511 aa).

This sequence belongs to the intron maturase 2 family. MatK subfamily.

The protein localises to the plastid. The protein resides in the chloroplast. Functionally, usually encoded in the trnK tRNA gene intron. Probably assists in splicing its own and other chloroplast group II introns. This Acorus calamus var. americanus (American sweet flag) protein is Maturase K.